Reading from the N-terminus, the 430-residue chain is MASLKIKYAAIIISSLIAGGLISVTAWQYLNSSQKTVPAEQKAPEKKVLFWYDPMKPDTKFDKPGKSPFMDMDLVPKYADESGDKSSGGIRIDPTQVQNLGLKTQKVTRGMLNYSQTIPANVSYNEYQFVIVQARSDGFVEKVYPLTIGDHVKKGTPLIDITIPEWVEAQSEFLLLSGTGGTPTQIKGVLERLRLAGMPEEDIQRLRSTRTIQTRFTIKAPIDGVITAFDLRTGMNISKDKVVAQIQGMDPVWISAAVPESIAYLLKDTSQFEISVPAYPDKTFHVEKWNILPSVDQTTRTLQVRLQVTNKDEFLKPGMNAYLKLNTQSQEMLLIPSQAVIDTGKEQRVITVDDEGKFVPKQIHVLHESQQQSGIGSGLNEGDTVVVSGLFLIDSEANITGALERMRHPEKTENSMPAMSEQPVNMHSGH.

An N-terminal signal peptide occupies residues 1–28 (MASLKIKYAAIIISSLIAGGLISVTAWQ). A disordered region spans residues 407–430 (RHPEKTENSMPAMSEQPVNMHSGH). A compositionally biased stretch (polar residues) spans 414-430 (NSMPAMSEQPVNMHSGH).

It belongs to the membrane fusion protein (MFP) (TC 8.A.1) family.

Its function is as follows. Component of the sil cation efflux system that confers resistance to silver. May be part of a three-component cation/proton antiporter. This chain is Putative membrane fusion protein SilB (silB), found in Salmonella typhimurium.